A 480-amino-acid polypeptide reads, in one-letter code: Ammonium transporter 2 member 4 (480 aa).

Residues 1–27 (MELPSNLLPDEASPEWMNKGDNAWQLT) lie on the Extracellular side of the membrane. Residues 28–48 (AATMVGLQSIPGLVILYGSLV) form a helical membrane-spanning segment. The Cytoplasmic portion of the chain corresponds to 49 to 51 (KKT). The chain crosses the membrane as a helical span at residues 52-72 (WAINSAFMAFYAFASVLLCWV). Topologically, residues 73–113 (SWAYQMSFGEKMVFFLGKPNVALDEKFLLGKAFLGNFPNAT) are extracellular. Residue asparagine 111 is glycosylated (N-linked (GlcNAc...) asparagine). A helical transmembrane segment spans residues 114–134 (MVFYQGVFAGLTLILIAGALL). Residues 135-141 (GRMNIRA) lie on the Cytoplasmic side of the membrane. A helical transmembrane segment spans residues 142 to 162 (WMLFVPLWVTFSYTVVAFSIW). Residues 163 to 175 (CPDGWLAKRGVID) are Extracellular-facing. Residues 176–196 (FAGGYVIHLSAGVAGFTAAYW) traverse the membrane as a helical segment. Residues 197–214 (VGPRADKDRETFPAATNN) lie on the Cytoplasmic side of the membrane. Residues 215–235 (MIMVLAGAGLLWMGWSGFNGG) traverse the membrane as a helical segment. Residues 236 to 242 (APFVAST) are Extracellular-facing. A helical transmembrane segment spans residues 243 to 263 (IASLAILNTHVCTAASITVWV). Topologically, residues 264 to 274 (MLDTFYFGKPT) are cytoplasmic. Residues 275 to 295 (VFGAVQGMITGLVCITPAAGV) form a helical membrane-spanning segment. Topologically, residues 296–298 (VQG) are extracellular. A helical membrane pass occupies residues 299–319 (WAAILMGFISGSIPWYTMMVL). Residues 320 to 334 (HNKVNFLKKIDDPMA) lie on the Cytoplasmic side of the membrane. A helical membrane pass occupies residues 335 to 355 (VFHTHAIAGALGGILTGFFAV). Topologically, residues 356–394 (PKLCRLFYMVPDWEKYIGLAYGLQNKGATQAGLKQMVIQ) are extracellular. A helical transmembrane segment spans residues 395 to 415 (IEAIVFVICYNVLMTSLICLI). At 416 to 480 (VRVIVPLRLN…SRSLGELQMV (65 aa)) the chain is on the cytoplasmic side.

Belongs to the ammonia transporter channel (TC 1.A.11.2) family.

Its subcellular location is the cell membrane. In terms of biological role, involved in ammonium transport. May be involved in arbuscular mycorrhizal (AM) symbiosis with AM fungi. This Medicago truncatula (Barrel medic) protein is Ammonium transporter 2 member 4.